A 199-amino-acid polypeptide reads, in one-letter code: Urease accessory protein UreG (199 aa).

A GTP-binding site is contributed by 8–15 (GPVGSGKT).

Belongs to the SIMIBI class G3E GTPase family. UreG subfamily. As to quaternary structure, homodimer. UreH, UreF and UreG form a complex that acts as a GTP-hydrolysis-dependent molecular chaperone, activating the urease apoprotein by helping to assemble the nickel containing metallocenter of UreC. The UreE protein probably delivers the nickel.

It localises to the cytoplasm. In terms of biological role, facilitates the functional incorporation of the urease nickel metallocenter. This process requires GTP hydrolysis, probably effectuated by UreG. This Helicobacter acinonychis (strain Sheeba) protein is Urease accessory protein UreG.